Reading from the N-terminus, the 314-residue chain is Taste receptor type 2 member 42 (314 aa).

The Extracellular portion of the chain corresponds to 1-7 (MPTELDK). The helical transmembrane segment at 8–28 (IFLILAIVEFIIGLLGNVFIG) threads the bilayer. Residues 29–50 (LVNCSEGIKNQKVFSADFILTC) are Cytoplasmic-facing. The chain crosses the membrane as a helical span at residues 51–71 (LAISTIGQLLVILFDSFLVGL). The Extracellular portion of the chain corresponds to 72–101 (ASHLYTTYRLGKLVILLWHMTNHLTTWLAT). Residues 102 to 122 (CLSIFYFFKIAHFPHSLFLWL) form a helical membrane-spanning segment. Over 123 to 127 (RWRMN) the chain is Cytoplasmic. A helical transmembrane segment spans residues 128–148 (GMIVMLRTLSLFLLIFDSLVL). At 149 to 187 (KLFIDISLNIIDKSNLTLYFDESKTLYDKLSILKTLLSL) the chain is on the extracellular side. A glycan (N-linked (GlcNAc...) asparagine) is linked at Asn-163. Residues 188 to 208 (TSFIPFSLSLTSLLFLFLSLV) traverse the membrane as a helical segment. Residues 209 to 238 (RHTRNLKLSSLGSRDSSTEAHRRAMKMVMS) lie on the Cytoplasmic side of the membrane. Residues 239–259 (FLFLFIVHFFSLQVANWIFFM) form a helical membrane-spanning segment. Residues 260–265 (SWNNKY) lie on the Extracellular side of the membrane. Residues 266-286 (IKFVMLALNAFPSCHSFILIL) form a helical membrane-spanning segment. Topologically, residues 287-314 (GNSKLRQTAVRLLSHLRNYTKTSNPLPL) are cytoplasmic.

Belongs to the G-protein coupled receptor T2R family.

The protein localises to the membrane. Receptor that may play a role in the perception of bitterness and is gustducin-linked. May play a role in sensing the chemical composition of the gastrointestinal content. The activity of this receptor may stimulate alpha gustducin, mediate PLC-beta-2 activation and lead to the gating of TRPM5. The polypeptide is Taste receptor type 2 member 42 (TAS2R42) (Pongo pygmaeus (Bornean orangutan)).